The chain runs to 143 residues: Nucleoside diphosphate kinase (143 aa).

The ATP site is built by Lys11, Phe59, Arg87, Thr93, Arg104, and Asn114. The Pros-phosphohistidine intermediate role is filled by His117.

It belongs to the NDK family. In terms of assembly, homotetramer. It depends on Mg(2+) as a cofactor.

The protein localises to the cytoplasm. It catalyses the reaction dZDP + ATP = dZTP + ADP. The catalysed reaction is a 2'-deoxyribonucleoside 5'-diphosphate + ATP = a 2'-deoxyribonucleoside 5'-triphosphate + ADP. The enzyme catalyses a ribonucleoside 5'-diphosphate + ATP = a ribonucleoside 5'-triphosphate + ADP. The protein operates within purine metabolism. Major role in the synthesis of nucleoside triphosphates other than ATP. The ATP gamma phosphate is transferred to the NDP beta phosphate via a ping-pong mechanism, using a phosphorylated active-site intermediate. Functionally, (Microbial infection) Catalyzes the phosphorylation of dZDP to dZTP, when the bacterium is infected by a phage that produces the substrate for the synthesis of dZTP (2- amino-2'-deoxyadenosine 5'-triphosphate), which is then used by the phage as a DNA polymerase substrate. This Acinetobacter baumannii (strain AB307-0294) protein is Nucleoside diphosphate kinase.